Here is a 183-residue protein sequence, read N- to C-terminus: Photosystem I assembly protein Ycf4 (183 aa).

The next 2 membrane-spanning stretches (helical) occupy residues 17-39 (NYLL…FLSY) and 59-81 (FIPQ…IYIY).

Belongs to the Ycf4 family.

The protein localises to the plastid. It localises to the chloroplast thylakoid membrane. Its function is as follows. Seems to be required for the assembly of the photosystem I complex. This is Photosystem I assembly protein Ycf4 from Cyanidium caldarium (Red alga).